Consider the following 352-residue polypeptide: Invasion chromosome antigen T (352 aa).

The protein belongs to the IcaT/YfdF family.

The protein resides in the secreted. May contribute to pathogenesis, although some of its characteristics suggest it is a fossil gene. The polypeptide is Invasion chromosome antigen T (Shigella flexneri serotype 5a (strain M90T)).